We begin with the raw amino-acid sequence, 392 residues long: 2-oxoisovalerate dehydrogenase subunit beta, mitochondrial (392 aa).

A mitochondrion-targeting transit peptide spans 1 to 50 (MAAVAAFAGWLLRLRAAGADGPWRRLCGAGLSRGFLQSASAYGAAAQRRQ). Tyr-152 serves as a coordination point for thiamine diphosphate. 5 residues coordinate K(+): Gly-178, Leu-180, Thr-181, Cys-228, and Asp-231. At Lys-232 the chain carries N6-acetyllysine. Position 233 (Asn-233) interacts with K(+). Residue Lys-241 is modified to N6-acetyllysine.

In terms of assembly, heterotetramer of 2 alpha/BCKDHA and 2 beta chains/BCKDHB that forms the branched-chain alpha-keto acid decarboxylase (E1) component of the BCKD complex. The branched-chain alpha-ketoacid dehydrogenase is a large complex composed of three major building blocks E1, E2 and E3. It is organized around E2, a 24-meric cubic core composed of DBT, to which are associated 6 to 12 copies of E1, and approximately 6 copies of the dehydrogenase E3, a DLD dimer. Thiamine diphosphate is required as a cofactor.

The protein resides in the mitochondrion matrix. The catalysed reaction is N(6)-[(R)-lipoyl]-L-lysyl-[protein] + 3-methyl-2-oxobutanoate + H(+) = N(6)-[(R)-S(8)-2-methylpropanoyldihydrolipoyl]-L-lysyl-[protein] + CO2. Its function is as follows. Together with BCKDHA forms the heterotetrameric E1 subunit of the mitochondrial branched-chain alpha-ketoacid dehydrogenase (BCKD) complex. The BCKD complex catalyzes the multi-step oxidative decarboxylation of alpha-ketoacids derived from the branched-chain amino-acids valine, leucine and isoleucine producing CO2 and acyl-CoA which is subsequently utilized to produce energy. The E1 subunit catalyzes the first step with the decarboxylation of the alpha-ketoacid forming an enzyme-product intermediate. A reductive acylation mediated by the lipoylamide cofactor of E2 extracts the acyl group from the E1 active site for the next step of the reaction. The chain is 2-oxoisovalerate dehydrogenase subunit beta, mitochondrial (BCKDHB) from Bos taurus (Bovine).